The chain runs to 276 residues: NH(3)-dependent NAD(+) synthetase (276 aa).

Residue 43–50 (GISGGVDS) participates in ATP binding. D49 lines the Mg(2+) pocket. Residue R146 coordinates deamido-NAD(+). An ATP-binding site is contributed by T166. E171 lines the Mg(2+) pocket. The deamido-NAD(+) site is built by K179 and D186. ATP is bound by residues K195 and T217. Residue 266–267 (HK) participates in deamido-NAD(+) binding.

It belongs to the NAD synthetase family. Homodimer.

It carries out the reaction deamido-NAD(+) + NH4(+) + ATP = AMP + diphosphate + NAD(+) + H(+). It participates in cofactor biosynthesis; NAD(+) biosynthesis; NAD(+) from deamido-NAD(+) (ammonia route): step 1/1. Its function is as follows. Catalyzes the ATP-dependent amidation of deamido-NAD to form NAD. Uses ammonia as a nitrogen source. The protein is NH(3)-dependent NAD(+) synthetase of Vibrio vulnificus (strain CMCP6).